The chain runs to 529 residues: Peptide chain release factor 3 (529 aa).

Residues Glu-10–Gly-279 form the tr-type G domain. Residues Ser-19 to Thr-26, Asp-87 to His-91, and Asn-141 to Asp-144 each bind GTP.

Belongs to the TRAFAC class translation factor GTPase superfamily. Classic translation factor GTPase family. PrfC subfamily.

It localises to the cytoplasm. In terms of biological role, increases the formation of ribosomal termination complexes and stimulates activities of RF-1 and RF-2. It binds guanine nucleotides and has strong preference for UGA stop codons. It may interact directly with the ribosome. The stimulation of RF-1 and RF-2 is significantly reduced by GTP and GDP, but not by GMP. The protein is Peptide chain release factor 3 of Desulfatibacillum aliphaticivorans.